Reading from the N-terminus, the 207-residue chain is Cytidylate kinase (207 aa).

G7–S15 lines the ATP pocket.

Belongs to the cytidylate kinase family. Type 1 subfamily.

It is found in the cytoplasm. It carries out the reaction CMP + ATP = CDP + ADP. The catalysed reaction is dCMP + ATP = dCDP + ADP. The protein is Cytidylate kinase of Deinococcus deserti (strain DSM 17065 / CIP 109153 / LMG 22923 / VCD115).